Consider the following 164-residue polypeptide: NADH-quinone oxidoreductase subunit I (164 aa).

4Fe-4S ferredoxin-type domains follow at residues Leu55 to Glu85 and Thr95 to Asn124. [4Fe-4S] cluster-binding residues include Cys65, Cys68, Cys71, Cys75, Cys104, Cys107, Cys110, and Cys114.

It belongs to the complex I 23 kDa subunit family. As to quaternary structure, NDH-1 is composed of 14 different subunits. Subunits NuoA, H, J, K, L, M, N constitute the membrane sector of the complex. It depends on [4Fe-4S] cluster as a cofactor.

The protein localises to the cell inner membrane. The catalysed reaction is a quinone + NADH + 5 H(+)(in) = a quinol + NAD(+) + 4 H(+)(out). In terms of biological role, NDH-1 shuttles electrons from NADH, via FMN and iron-sulfur (Fe-S) centers, to quinones in the respiratory chain. The immediate electron acceptor for the enzyme in this species is believed to be ubiquinone. Couples the redox reaction to proton translocation (for every two electrons transferred, four hydrogen ions are translocated across the cytoplasmic membrane), and thus conserves the redox energy in a proton gradient. In Dinoroseobacter shibae (strain DSM 16493 / NCIMB 14021 / DFL 12), this protein is NADH-quinone oxidoreductase subunit I.